Reading from the N-terminus, the 132-residue chain is UPF0060 membrane protein SG1469 (132 aa).

3 helical membrane-spanning segments follow: residues Val-5–Tyr-25, Leu-32–Pro-52, and Ala-60–Ile-80.

It belongs to the UPF0060 family.

The protein localises to the cell inner membrane. The chain is UPF0060 membrane protein SG1469 from Sodalis glossinidius (strain morsitans).